The sequence spans 363 residues: Histidinol-phosphate aminotransferase (363 aa).

K220 bears the N6-(pyridoxal phosphate)lysine mark.

This sequence belongs to the class-II pyridoxal-phosphate-dependent aminotransferase family. Histidinol-phosphate aminotransferase subfamily. In terms of assembly, homodimer. Pyridoxal 5'-phosphate is required as a cofactor.

It catalyses the reaction L-histidinol phosphate + 2-oxoglutarate = 3-(imidazol-4-yl)-2-oxopropyl phosphate + L-glutamate. It functions in the pathway amino-acid biosynthesis; L-histidine biosynthesis; L-histidine from 5-phospho-alpha-D-ribose 1-diphosphate: step 7/9. This chain is Histidinol-phosphate aminotransferase, found in Paramagnetospirillum magneticum (strain ATCC 700264 / AMB-1) (Magnetospirillum magneticum).